The chain runs to 305 residues: D-alanine--D-alanine ligase (305 aa).

The ATP-grasp domain maps to 104-300 (RALFASAGIP…FPELVRWMVE (197 aa)). 131–181 (LPRPFVVKPLNEGSSVGVFIVRDNQPSPLPDWPFDADEVLVESFIPGRELT) serves as a coordination point for ATP. Mg(2+) contacts are provided by Asp249, Glu267, and Asn269.

It belongs to the D-alanine--D-alanine ligase family. Requires Mg(2+) as cofactor. The cofactor is Mn(2+).

The protein localises to the cytoplasm. It catalyses the reaction 2 D-alanine + ATP = D-alanyl-D-alanine + ADP + phosphate + H(+). It participates in cell wall biogenesis; peptidoglycan biosynthesis. Cell wall formation. The sequence is that of D-alanine--D-alanine ligase from Paramagnetospirillum magneticum (strain ATCC 700264 / AMB-1) (Magnetospirillum magneticum).